The chain runs to 548 residues: Probable malate:quinone oxidoreductase (548 aa).

The segment at 521–548 (DKPQAADSTPKPQLKPQPVQKEVADIAL) is disordered. Positions 530-541 (PKPQLKPQPVQK) are enriched in low complexity.

Belongs to the MQO family. The cofactor is FAD.

The catalysed reaction is (S)-malate + a quinone = a quinol + oxaloacetate. Its pathway is carbohydrate metabolism; tricarboxylic acid cycle; oxaloacetate from (S)-malate (quinone route): step 1/1. This chain is Probable malate:quinone oxidoreductase, found in Shigella sonnei (strain Ss046).